We begin with the raw amino-acid sequence, 1210 residues long: Disease resistance-like protein DSC2 (1210 aa).

Positions 59–223 constitute a TIR domain; it reads WTHQVFPSFR…KVAKDVSDVL (165 aa). E134 is an active-site residue. The NB-ARC domain maps to 241–511; sequence ITRINSLLCL…CLFNGCQVNH (271 aa). 9 LRR repeats span residues 662-685, 686-709, 711-732, 756-780, 783-804, 805-828, 830-848, 849-873, and 940-970; these read AKFL…IQPL, KNLK…SNAT, LESL…IRGT, ATSL…LPGD, MRSL…PEIS, TNIQ…RLWS, LDKL…PPVP, DGIS…NLSQ, and LPEL…NLSQ.

Belongs to the disease resistance NB-LRR family. As to quaternary structure, interacts with DSC1.

The enzyme catalyses NAD(+) + H2O = ADP-D-ribose + nicotinamide + H(+). In terms of biological role, TIR-NB-LRR receptor-like protein involved in plant defense. Acts as a trigger of hypersensitive response (HR). Functions as a guard of CAMTA3, a negative regulator of immunity, during pathogen infection. This chain is Disease resistance-like protein DSC2, found in Arabidopsis thaliana (Mouse-ear cress).